Reading from the N-terminus, the 300-residue chain is Protoheme IX farnesyltransferase (300 aa).

9 helical membrane-spanning segments follow: residues 24 to 44, 46 to 66, 94 to 114, 118 to 138, 146 to 166, 172 to 192, 217 to 237, 239 to 259, and 278 to 298; these read VTQL…PGMV, WHVL…AFAI, PQIL…LYTF, LTMW…TLLL, IVIG…AVTG, AWIL…VLAL, LHIL…FISG, SGAV…AYAW, and IVYL…RPLL.

This sequence belongs to the UbiA prenyltransferase family. Protoheme IX farnesyltransferase subfamily.

It localises to the cell inner membrane. It catalyses the reaction heme b + (2E,6E)-farnesyl diphosphate + H2O = Fe(II)-heme o + diphosphate. The protein operates within porphyrin-containing compound metabolism; heme O biosynthesis; heme O from protoheme: step 1/1. Converts heme B (protoheme IX) to heme O by substitution of the vinyl group on carbon 2 of heme B porphyrin ring with a hydroxyethyl farnesyl side group. The chain is Protoheme IX farnesyltransferase from Burkholderia cenocepacia (strain HI2424).